Here is a 160-residue protein sequence, read N- to C-terminus: Transcriptional repressor NrdR (160 aa).

The segment at 3–34 (CPFCRHADTQVVDSRVSEDGATIRRRRRCPAC) is a zinc-finger region. Residues 49–139 (PSVVKKDGSR…VYRRFEDVSE (91 aa)) enclose the ATP-cone domain.

Belongs to the NrdR family. Zn(2+) serves as cofactor.

Negatively regulates transcription of bacterial ribonucleotide reductase nrd genes and operons by binding to NrdR-boxes. This Paraburkholderia phytofirmans (strain DSM 17436 / LMG 22146 / PsJN) (Burkholderia phytofirmans) protein is Transcriptional repressor NrdR.